The primary structure comprises 206 residues: Ribosomal RNA small subunit methyltransferase G (206 aa).

S-adenosyl-L-methionine contacts are provided by residues G71, F76, 125 to 126, and R139; that span reads IE.

The protein belongs to the methyltransferase superfamily. RNA methyltransferase RsmG family.

The protein resides in the cytoplasm. The enzyme catalyses guanosine(527) in 16S rRNA + S-adenosyl-L-methionine = N(7)-methylguanosine(527) in 16S rRNA + S-adenosyl-L-homocysteine. In terms of biological role, specifically methylates the N7 position of guanine in position 527 of 16S rRNA. The chain is Ribosomal RNA small subunit methyltransferase G from Cereibacter sphaeroides (strain ATCC 17023 / DSM 158 / JCM 6121 / CCUG 31486 / LMG 2827 / NBRC 12203 / NCIMB 8253 / ATH 2.4.1.) (Rhodobacter sphaeroides).